The primary structure comprises 423 residues: Putative galacturan 1,4-alpha-galacturonidase C (423 aa).

The first 20 residues, 1–20, serve as a signal peptide directing secretion; the sequence is MRFSIISLVSLPLFLGLTYA. Residues N100, N120, N150, N173, and N185 are each glycosylated (N-linked (GlcNAc...) asparagine). D229 acts as the Proton donor in catalysis. A disulfide bridge links C231 with C248. The N-linked (GlcNAc...) asparagine glycan is linked to N245. Residue N252 is part of the active site. N-linked (GlcNAc...) asparagine glycosylation is found at N344 and N362. The cysteines at positions 379 and 385 are disulfide-linked. The N-linked (GlcNAc...) asparagine glycan is linked to N400. A disulfide bridge connects residues C409 and C423.

The protein belongs to the glycosyl hydrolase 28 family.

It is found in the secreted. The enzyme catalyses [(1-&gt;4)-alpha-D-galacturonosyl](n) + H2O = alpha-D-galacturonate + [(1-&gt;4)-alpha-D-galacturonosyl](n-1). Its function is as follows. Specific in hydrolyzing the terminal glycosidic bond of polygalacturonic acid and oligogalacturonates. In Neosartorya fischeri (strain ATCC 1020 / DSM 3700 / CBS 544.65 / FGSC A1164 / JCM 1740 / NRRL 181 / WB 181) (Aspergillus fischerianus), this protein is Putative galacturan 1,4-alpha-galacturonidase C (rgxC).